The following is a 264-amino-acid chain: Iodotyrosine deiodinase (264 aa).

FMN is bound by residues R75–R79 and S103–G104. 3-iodo-L-tyrosine is bound by residues A105, E132, Y136, and K157. FMN is bound by residues T212–T214 and R254.

This sequence belongs to the nitroreductase family. The cofactor is FMN.

It carries out the reaction 2 iodide + L-tyrosine + 2 NADP(+) = 3,5-diiodo-L-tyrosine + 2 NADPH + H(+). The enzyme catalyses iodide + L-tyrosine + NADP(+) = 3-iodo-L-tyrosine + NADPH. It catalyses the reaction 3-iodo-L-tyrosine + iodide + NADP(+) = 3,5-diiodo-L-tyrosine + NADPH + H(+). The catalysed reaction is L-tyrosine + chloride + NADP(+) = 3-chloro-L-tyrosine + NADPH. It carries out the reaction bromide + L-tyrosine + NADP(+) = 3-bromo-L-tyrosine + NADPH. Functionally, catalyzes the dehalogenation of halotyrosines such as 3,5-diiodo-L-tyrosine. Likely to also catalyze the dehalogenation of other halotyrosines such as 3-bromo-L-tyrosine, 3-chloro-L-tyrosine and 3-iodo-L-tyrosine. This is Iodotyrosine deiodinase from Nematostella vectensis (Starlet sea anemone).